The chain runs to 100 residues: MAKVVEVGRICVKTRGREAGRKCVIVDIIDENFVLVTGPKSLTGVRRRRVNIDHIEILDKKVDIQKGASDEEVLKALEEAGLADFMREPVRIARITPFTL.

The protein belongs to the eukaryotic ribosomal protein eL14 family.

This chain is Large ribosomal subunit protein eL14, found in Aeropyrum pernix (strain ATCC 700893 / DSM 11879 / JCM 9820 / NBRC 100138 / K1).